The primary structure comprises 303 residues: Sulfotransferase 6B1 (303 aa).

3'-phosphoadenylyl sulfate is bound at residue 65–70; the sequence is KCGSNW. H118 acts as the Proton acceptor in catalysis. Residues R140, S148, Y203, 237–242, and 259–261 contribute to the 3'-phosphoadenylyl sulfate site; these read STFQAM and RKG.

It belongs to the sulfotransferase 1 family.

It localises to the cytoplasm. The protein resides in the cytosol. The enzyme catalyses thyroxine + 3'-phosphoadenylyl sulfate = thyroxine sulfate + adenosine 3',5'-bisphosphate + H(+). Its function is as follows. Sulfotransferase that utilizes 3'-phospho-5'-adenylyl sulfate (PAPS) as sulfonate donor to catalyze the sulfate conjugation of thyroxine. Involved in the metabolism of thyroxine. This is Sulfotransferase 6B1 (SULT6B1) from Pan troglodytes (Chimpanzee).